The primary structure comprises 514 residues: Putative transposase y4uI (514 aa).

Residues 11–93 form the HTH IS408-type domain; the sequence is VREILKLRLD…PDWSAVAREL (83 aa). The 190-residue stretch at 128 to 317 folds into the Integrase catalytic domain; it reads HGRLPLVMRQ…TRRALFDELD (190 aa).

This sequence belongs to the transposase IS21/IS408/IS1162 family.

This Sinorhizobium fredii (strain NBRC 101917 / NGR234) protein is Putative transposase y4uI.